Reading from the N-terminus, the 918-residue chain is Protein translocase subunit SecA (918 aa).

ATP is bound by residues Gln-87, Gly-105–Thr-109, and Asp-500. The tract at residues Ala-876–Arg-918 is disordered. Zn(2+)-binding residues include Cys-902, Cys-904, Cys-913, and His-914. A compositionally biased stretch (basic residues) spans Lys-908–Arg-918.

It belongs to the SecA family. Monomer and homodimer. Part of the essential Sec protein translocation apparatus which comprises SecA, SecYEG and auxiliary proteins SecDF-YajC and YidC. The cofactor is Zn(2+).

It is found in the cell inner membrane. The protein resides in the cytoplasm. The enzyme catalyses ATP + H2O + cellular proteinSide 1 = ADP + phosphate + cellular proteinSide 2.. In terms of biological role, part of the Sec protein translocase complex. Interacts with the SecYEG preprotein conducting channel. Has a central role in coupling the hydrolysis of ATP to the transfer of proteins into and across the cell membrane, serving both as a receptor for the preprotein-SecB complex and as an ATP-driven molecular motor driving the stepwise translocation of polypeptide chains across the membrane. This chain is Protein translocase subunit SecA, found in Rhodospirillum centenum (strain ATCC 51521 / SW).